The primary structure comprises 167 residues: 2-C-methyl-D-erythritol 2,4-cyclodiphosphate synthase (167 aa).

Positions 10 and 12 each coordinate a divalent metal cation. Residues 10-12 and 36-37 contribute to the 4-CDP-2-C-methyl-D-erythritol 2-phosphate site; these read DVH and HS. His44 contacts a divalent metal cation. 4-CDP-2-C-methyl-D-erythritol 2-phosphate contacts are provided by residues 58-60, 63-67, 134-137, Phe141, and Arg144; these read NIG, FPNTN, and TTSE.

It belongs to the IspF family. As to quaternary structure, homotrimer. The cofactor is a divalent metal cation.

It catalyses the reaction 4-CDP-2-C-methyl-D-erythritol 2-phosphate = 2-C-methyl-D-erythritol 2,4-cyclic diphosphate + CMP. Its pathway is isoprenoid biosynthesis; isopentenyl diphosphate biosynthesis via DXP pathway; isopentenyl diphosphate from 1-deoxy-D-xylulose 5-phosphate: step 4/6. In terms of biological role, involved in the biosynthesis of isopentenyl diphosphate (IPP) and dimethylallyl diphosphate (DMAPP), two major building blocks of isoprenoid compounds. Catalyzes the conversion of 4-diphosphocytidyl-2-C-methyl-D-erythritol 2-phosphate (CDP-ME2P) to 2-C-methyl-D-erythritol 2,4-cyclodiphosphate (ME-CPP) with a corresponding release of cytidine 5-monophosphate (CMP). This is 2-C-methyl-D-erythritol 2,4-cyclodiphosphate synthase from Azobacteroides pseudotrichonymphae genomovar. CFP2.